Consider the following 62-residue polypeptide: Large ribosomal subunit protein bL32 (62 aa).

Residues 1 to 18 show a composition bias toward basic residues; the sequence is MGVPKKRTSKMRRDRRRA. The interval 1–22 is disordered; the sequence is MGVPKKRTSKMRRDRRRAANNN.

This sequence belongs to the bacterial ribosomal protein bL32 family.

The chain is Large ribosomal subunit protein bL32 from Myxococcus xanthus (strain DK1622).